Consider the following 84-residue polypeptide: Large ribosomal subunit protein bL27 (84 aa).

The disordered stretch occupies residues 1 to 22 (MAHKKAGGSTRNGRDSESKRLG).

It belongs to the bacterial ribosomal protein bL27 family.

This is Large ribosomal subunit protein bL27 from Shewanella oneidensis (strain ATCC 700550 / JCM 31522 / CIP 106686 / LMG 19005 / NCIMB 14063 / MR-1).